Consider the following 618-residue polypeptide: Proline--tRNA ligase (618 aa).

It belongs to the class-II aminoacyl-tRNA synthetase family. ProS type 1 subfamily. Homodimer.

It localises to the cytoplasm. The catalysed reaction is tRNA(Pro) + L-proline + ATP = L-prolyl-tRNA(Pro) + AMP + diphosphate. In terms of biological role, catalyzes the attachment of proline to tRNA(Pro) in a two-step reaction: proline is first activated by ATP to form Pro-AMP and then transferred to the acceptor end of tRNA(Pro). As ProRS can inadvertently accommodate and process non-cognate amino acids such as alanine and cysteine, to avoid such errors it has two additional distinct editing activities against alanine. One activity is designated as 'pretransfer' editing and involves the tRNA(Pro)-independent hydrolysis of activated Ala-AMP. The other activity is designated 'posttransfer' editing and involves deacylation of mischarged Ala-tRNA(Pro). The misacylated Cys-tRNA(Pro) is not edited by ProRS. The sequence is that of Proline--tRNA ligase from Streptococcus pyogenes serotype M5 (strain Manfredo).